Reading from the N-terminus, the 198-residue chain is Recombination protein RecR (198 aa).

Residues 57–72 (CEKCNTFTEAQICEVC) form a C4-type zinc finger. The 96-residue stretch at 80–175 (TLLCVVETPA…AVTRLARGVP (96 aa)) folds into the Toprim domain.

Belongs to the RecR family.

Its function is as follows. May play a role in DNA repair. It seems to be involved in an RecBC-independent recombinational process of DNA repair. It may act with RecF and RecO. The sequence is that of Recombination protein RecR from Burkholderia ambifaria (strain MC40-6).